We begin with the raw amino-acid sequence, 510 residues long: MFEAGGLFGFTGTTMASLMFFWSVYRQFVPYQIRDYLEKCFYKMFGLVSNSVHIKFTEYTEDKGLKKSQAYDLIRNYLSSKSTARAQRLKANESKNSKSLVLSLDNHEAVEDVFQGVKVVWSLSVWKSNDQADSSEKRYLTLSFHNRYREMITTTYLDHVLREGKEIGLKNRERKLYTNNSSQDYSAWREGRWSNVPFDHPATFETLAMDLEKKEGMKKDLIKFTKGKDYYRKVGKPWKRGYLLFGPPGTGKSTMISAMANFLEYDVYDLELTTVKDNSELKKLMLDTKGKSIVVIEDIDCSLDLTGQRKKKKEEDEDEEEEEKKKEAEKLLKRERGERESKVTLSGLLNAIDGLWSACSGEKIIVFTTNYLDKLDPALIRRGRMDNHIEMSYCRFEAFKVLAKNYLEIESHDLFGEIKRLVEETDMSPADVAENLMPKSDEDDADICLTRLVKSLEEEKEKAKKLAEEEKMKKAARDARRIKKKAEEEHKKKNKVEENGDVSHDNGNHI.

Residues 7-25 (LFGFTGTTMASLMFFWSVY) form a helical membrane-spanning segment. Position 246-253 (246-253 (GPPGTGKS)) interacts with ATP. The interval 460–510 (KEKAKKLAEEEKMKKAARDARRIKKKAEEEHKKKNKVEENGDVSHDNGNHI) is disordered.

It belongs to the AAA ATPase family. BCS1 subfamily. Mg(2+) is required as a cofactor.

It is found in the membrane. The enzyme catalyses ATP + H2O = ADP + phosphate + H(+). This is AAA-ATPase At3g28540 from Arabidopsis thaliana (Mouse-ear cress).